Here is an 898-residue protein sequence, read N- to C-terminus: MNGVNEIRAAFLDFFRKNGHEIVPSSPLVPRNDPTLMFTNAGMVQFKNLFTGVEKRPYTRASTAQKCVRAGGKHNDLDNVGYTARHHTFFEMLGNFSFGDYFKPLAIELAWKLITEVFDLPKDRLLVTVYHDDDEAYDLWKKIAGFPDSKIIRIATSDNFWAMGDTGPCGPCSEIFYDQGEKLFGGPPGSADEDGDRFLEFWNLVFMQFEQRGPGDRIALPKPSIDTGMGLERIAALLQGVTSNYDIDLMRALILAVAQATGVDPDGPMRASHRVIADHLRASSFLIADGVLPSNEGRGYVLRRIMRRAMRHAQLLGAQEPLLWRLVPALTREMGQAYPELLRAEALIVETLRLEETRFRATLARGLTILEDETRHLSEGGVLSGEVAFKLYDTYGFPLDLTQDALRAKSLGVDMEGFEKAMARQRAEARKAWSGSGEAATDTHWFALREQLGATDFLGYDTEKAEALIQAILQDGKEVLRLEAGQSGAIVLNQTPFYGESGGQVGDTGLIIAPGMRFKVENTHKKLGDLFIHEGIVEEGAVVPGLEVRTLVDHSRRTAVRANHSATHLLHEALRQVLGDHIAQKGSLVAPDRLRFDFSHPKPVTPEEWTQIEDIANSVILENAPVTTKLMSIEDAMGSGARALFGEKYGDEVRVVSMGYDEDKADDSTDGRIAPPFSVELCGGTHVARTGDIGLLTIISESAVAAGVRRIEAKTGSSARHHLNTQASLLHSLAAQLKSPEDEASKRLSALIEERRKLDRELSEARKKLAMGGGSSNGADSPLREIGGIKFFRRAVTGVEMKDLKSLADEAKQTIGSGIVAIVGVGSDNKASVVVGVTDDLIDRFDAVALVRLAAGKLGGKGGGGRKDLAQAGGPDGEAAEAALTAIEESLGSSLPTP.

The Zn(2+) site is built by histidine 564, histidine 568, cysteine 682, and histidine 686.

Belongs to the class-II aminoacyl-tRNA synthetase family. Zn(2+) serves as cofactor.

Its subcellular location is the cytoplasm. The enzyme catalyses tRNA(Ala) + L-alanine + ATP = L-alanyl-tRNA(Ala) + AMP + diphosphate. Its function is as follows. Catalyzes the attachment of alanine to tRNA(Ala) in a two-step reaction: alanine is first activated by ATP to form Ala-AMP and then transferred to the acceptor end of tRNA(Ala). Also edits incorrectly charged Ser-tRNA(Ala) and Gly-tRNA(Ala) via its editing domain. This Beijerinckia indica subsp. indica (strain ATCC 9039 / DSM 1715 / NCIMB 8712) protein is Alanine--tRNA ligase.